The sequence spans 205 residues: Putative 3-methyladenine DNA glycosylase (205 aa).

This sequence belongs to the DNA glycosylase MPG family.

This chain is Putative 3-methyladenine DNA glycosylase, found in Bacillus cereus (strain G9842).